A 151-amino-acid polypeptide reads, in one-letter code: 3-dehydroquinate dehydratase (151 aa).

Residue tyrosine 24 is the Proton acceptor of the active site. Substrate-binding residues include asparagine 76, histidine 82, and aspartate 89. Histidine 102 serves as the catalytic Proton donor. Residues 103–104 (VS) and arginine 113 contribute to the substrate site.

Belongs to the type-II 3-dehydroquinase family. In terms of assembly, homododecamer.

It catalyses the reaction 3-dehydroquinate = 3-dehydroshikimate + H2O. It participates in metabolic intermediate biosynthesis; chorismate biosynthesis; chorismate from D-erythrose 4-phosphate and phosphoenolpyruvate: step 3/7. Functionally, catalyzes a trans-dehydration via an enolate intermediate. The chain is 3-dehydroquinate dehydratase from Afipia carboxidovorans (strain ATCC 49405 / DSM 1227 / KCTC 32145 / OM5) (Oligotropha carboxidovorans).